Consider the following 345-residue polypeptide: uncharacterized protein (345 aa).

A run of 2 helical transmembrane segments spans residues 23–43 (VVGF…YSYV) and 56–76 (FLIA…FVAL). The segment at 326–345 (VTEPTTNSKRKPVKAKKAKK) is disordered. Basic residues predominate over residues 333–345 (SKRKPVKAKKAKK).

The protein localises to the cell membrane. This is an uncharacterized protein from Mycoplasma pneumoniae (strain ATCC 29342 / M129 / Subtype 1) (Mycoplasmoides pneumoniae).